Here is a 480-residue protein sequence, read N- to C-terminus: Endothelial transcription factor GATA-2 (480 aa).

S73 is modified (phosphoserine). The residue at position 86 (R86) is an Asymmetric dimethylarginine. The segment at 166–208 (SGSHLFGFPPTPPKEVSPDPSTTGAASPASSSAGGSVARGEDK) is disordered. Low complexity predominate over residues 183–201 (PDPSTTGAASPASSSAGGS). Residue S192 is modified to Phosphoserine. 2 GATA-type zinc fingers span residues 295–319 (CVNCGATATPLWRRDGTGHYLCNAC) and 349–373 (CANCQTTTTTLWRRNANGDPVCNAC). Residue K389 forms a Glycyl lysine isopeptide (Lys-Gly) (interchain with G-Cter in SUMO2) linkage. The tract at residues 457 to 480 (TPIHPSSSLSFGHPHPSSMVTAMG) is disordered.

Interacts with BRD3. Interacts with AR and CCAR1. Interacts with MDFIC.

The protein localises to the nucleus. In terms of biological role, transcriptional activator which regulates endothelin-1 gene expression in endothelial cells. Binds to the consensus sequence 5'-AGATAG-3'. The polypeptide is Endothelial transcription factor GATA-2 (Gata2) (Mus musculus (Mouse)).